Here is a 191-residue protein sequence, read N- to C-terminus: Glycerol-3-phosphate acyltransferase (191 aa).

Helical transmembrane passes span Leu-10 to Ala-30, Phe-57 to Val-77, Phe-84 to Phe-104, Phe-118 to Leu-138, and Tyr-158 to Ile-178.

The protein belongs to the PlsY family. In terms of assembly, probably interacts with PlsX.

The protein resides in the cell inner membrane. It carries out the reaction an acyl phosphate + sn-glycerol 3-phosphate = a 1-acyl-sn-glycero-3-phosphate + phosphate. It participates in lipid metabolism; phospholipid metabolism. Functionally, catalyzes the transfer of an acyl group from acyl-phosphate (acyl-PO(4)) to glycerol-3-phosphate (G3P) to form lysophosphatidic acid (LPA). This enzyme utilizes acyl-phosphate as fatty acyl donor, but not acyl-CoA or acyl-ACP. The sequence is that of Glycerol-3-phosphate acyltransferase from Neorickettsia sennetsu (strain ATCC VR-367 / Miyayama) (Ehrlichia sennetsu).